The chain runs to 773 residues: Phenylalanine--tRNA ligase beta subunit (773 aa).

The tRNA-binding domain occupies 39–150 (LKAPDKVVVG…GKLELGRPLN (112 aa)). The B5 domain occupies 391–467 (KELPIIPISI…RIIGIDNIAS (77 aa)). Mg(2+)-binding residues include aspartate 445, aspartate 451, glutamate 454, and glutamate 455. Positions 682 to 773 (SKFPAITRDL…TLKNLGLDLR (92 aa)) constitute an FDX-ACB domain.

Belongs to the phenylalanyl-tRNA synthetase beta subunit family. Type 1 subfamily. As to quaternary structure, tetramer of two alpha and two beta subunits. The cofactor is Mg(2+).

The protein localises to the cytoplasm. The catalysed reaction is tRNA(Phe) + L-phenylalanine + ATP = L-phenylalanyl-tRNA(Phe) + AMP + diphosphate + H(+). This chain is Phenylalanine--tRNA ligase beta subunit (pheT), found in Campylobacter jejuni subsp. jejuni serotype O:2 (strain ATCC 700819 / NCTC 11168).